Here is an 88-residue protein sequence, read N- to C-terminus: Small ribosomal subunit protein bS20 (88 aa).

Positions 1 to 27 are disordered; the sequence is MANSKSAKKRALQSEKRRQHNASRRSM.

Belongs to the bacterial ribosomal protein bS20 family.

Binds directly to 16S ribosomal RNA. In Shewanella loihica (strain ATCC BAA-1088 / PV-4), this protein is Small ribosomal subunit protein bS20.